Reading from the N-terminus, the 220-residue chain is Regulatory protein VanRB (220 aa).

One can recognise a Response regulatory domain in the interval 4–117; sequence RILLVEDDDH…ILLKRVEALL (114 aa). At Asp53 the chain carries 4-aspartylphosphate. Residues 124–218 constitute a DNA-binding region (ompR/PhoB-type); that stretch reads AKEFRVGRLT…IRGVGYRLEE (95 aa).

In terms of processing, may be phosphorylated by VanSB. May also be dephosphorylated by VanSB.

It is found in the cytoplasm. Its function is as follows. Member of the two-component regulatory system VanSB/VanRB. Activates the transcription of vanSB, vanYB and vanW in response to vancomycin which results in vancomycin resistance. In Enterococcus faecalis (strain ATCC 700802 / V583), this protein is Regulatory protein VanRB (vanRB).